We begin with the raw amino-acid sequence, 397 residues long: Na(+)/H(+) antiporter NhaA 2 (397 aa).

11 helical membrane passes run 9 to 29, 59 to 79, 95 to 115, 125 to 145, 154 to 174, 177 to 197, 222 to 242, 260 to 280, 292 to 312, 332 to 352, and 371 to 391; these read LHNP…AMAV, LLLW…GLEL, ILPV…YTLI, GWAI…ALLG, LFLL…IAFF, SELS…LILM, SGVH…LKGE, VVGL…SLQG, LGIA…FVWL, GVAL…SLAF, and LGIL…LRFS.

This sequence belongs to the NhaA Na(+)/H(+) (TC 2.A.33) antiporter family.

The protein resides in the cell inner membrane. The catalysed reaction is Na(+)(in) + 2 H(+)(out) = Na(+)(out) + 2 H(+)(in). In terms of biological role, na(+)/H(+) antiporter that extrudes sodium in exchange for external protons. This Magnetococcus marinus (strain ATCC BAA-1437 / JCM 17883 / MC-1) protein is Na(+)/H(+) antiporter NhaA 2.